Here is a 296-residue protein sequence, read N- to C-terminus: ADP-dependent (S)-NAD(P)H-hydrate dehydratase (296 aa).

Residues 18–292 form the YjeF C-terminal domain; sequence TALRFPHVFK…PAARWLRNRI (275 aa). 3 residues coordinate (6S)-NADPHX: Ala-53, Gly-113, and His-165. Residues 202-206 and Gly-231 contribute to the AMP site; that span reads KGHKT. Asp-232 is a binding site for (6S)-NADPHX.

Belongs to the NnrD/CARKD family. Homotetramer. It depends on Mg(2+) as a cofactor.

The enzyme catalyses (6S)-NADHX + ADP = AMP + phosphate + NADH + H(+). It carries out the reaction (6S)-NADPHX + ADP = AMP + phosphate + NADPH + H(+). Catalyzes the dehydration of the S-form of NAD(P)HX at the expense of ADP, which is converted to AMP. Together with NAD(P)HX epimerase, which catalyzes the epimerization of the S- and R-forms, the enzyme allows the repair of both epimers of NAD(P)HX, a damaged form of NAD(P)H that is a result of enzymatic or heat-dependent hydration. The polypeptide is ADP-dependent (S)-NAD(P)H-hydrate dehydratase (Neisseria meningitidis serogroup B (strain ATCC BAA-335 / MC58)).